The chain runs to 199 residues: NAD(P)H dehydrogenase (quinone) (199 aa).

The region spanning 4 to 190 (ILVLYYSMYG…AIARFQGEHV (187 aa)) is the Flavodoxin-like domain. Residues 10–15 (SMYGHI) and 79–81 (TRF) contribute to the FMN site. NAD(+) is bound at residue tyrosine 12. Tryptophan 99 provides a ligand contact to substrate. FMN-binding positions include 114-119 (STGTGG) and histidine 134.

This sequence belongs to the WrbA family. The cofactor is FMN.

The catalysed reaction is a quinone + NADH + H(+) = a quinol + NAD(+). It carries out the reaction a quinone + NADPH + H(+) = a quinol + NADP(+). The chain is NAD(P)H dehydrogenase (quinone) from Yersinia enterocolitica serotype O:8 / biotype 1B (strain NCTC 13174 / 8081).